The following is a 71-amino-acid chain: Natterin-P (71 aa).

Positions 1-18 are cleaved as a signal peptide; the sequence is MKLLVLLVTLLVLSWTSA. The propeptide occupies 19-45; it reads EDLGDQEILENNEDNNHESELGEPAAQ. Acidic residues predominate over residues 22-31; sequence GDQEILENNE. Positions 22–54 are disordered; that stretch reads GDQEILENNEDNNHESELGEPAAQHTDDETSQL. Cys-62 and Cys-71 are disulfide-bonded.

It belongs to the natterin family. In terms of tissue distribution, expressed by the venom gland.

It localises to the secreted. With respect to regulation, inhibited by tissue-kallikrein inhibitor TKI and trasylol. Plasma kallikrein inhibitor PKSI527 and classical inhibitors of serine-, metallo-, thiol- or aspartate-peptidases evokes a minor inhibition of the peptide digestion. In terms of biological role, shows nociceptive, edema-inducing and kininogenase activity with release of kallidin from low molecular weight kininogen. The cleavage occurs at Met-Lys bonds. The protein is Natterin-P of Thalassophryne nattereri (Copper Joe toadfish).